The primary structure comprises 148 residues: IQ domain-containing protein F5 (148 aa).

IQ domains follow at residues 11–40 (ERSAAVFIQAWWRGMLVRRTLLHAALRAWI) and 67–96 (QEWAAVRLQSWVRMWCVRQRYCRLLNAVRI).

In Homo sapiens (Human), this protein is IQ domain-containing protein F5 (IQCF5).